A 664-amino-acid chain; its full sequence is Translation factor guf1, mitochondrial (664 aa).

The transit peptide at methionine 1–alanine 43 directs the protein to the mitochondrion. The tr-type G domain maps to aspartate 66 to valine 246. Residues alanine 75 to serine 82, aspartate 139 to histidine 143, and asparagine 193 to aspartate 196 each bind GTP.

This sequence belongs to the TRAFAC class translation factor GTPase superfamily. Classic translation factor GTPase family. LepA subfamily.

It is found in the mitochondrion inner membrane. The catalysed reaction is GTP + H2O = GDP + phosphate + H(+). In terms of biological role, promotes mitochondrial protein synthesis. May act as a fidelity factor of the translation reaction, by catalyzing a one-codon backward translocation of tRNAs on improperly translocated ribosomes. Binds to mitochondrial ribosomes in a GTP-dependent manner. This chain is Translation factor guf1, mitochondrial (guf1), found in Aspergillus oryzae (strain ATCC 42149 / RIB 40) (Yellow koji mold).